The primary structure comprises 775 residues: Subtilisin-like protease SBT3.8 (775 aa).

The N-terminal stretch at 1–26 (MKSCRTLIFVAIILNGLSTFVAHAGA) is a signal peptide. The propeptide at 27–109 (ESKVHIVYLG…VTPDSFYQLD (83 aa)) is activation peptide. In terms of domain architecture, Inhibitor I9 spans 30–108 (VHIVYLGEKQ…HVTPDSFYQL (79 aa)). One can recognise a Peptidase S8 domain in the interval 113 to 622 (TWDYLGLSVA…GGLVNPEKAA (510 aa)). N129 carries N-linked (GlcNAc...) asparagine glycosylation. The active-site Charge relay system is D143. Residues N174 and N202 are each glycosylated (N-linked (GlcNAc...) asparagine). The active-site Charge relay system is the H218. Residues 384–476 (SLVYPENPGN…VDYELGTDIL (93 aa)) enclose the PA domain. N395, N410, and N538 each carry an N-linked (GlcNAc...) asparagine glycan. S553 (charge relay system) is an active-site residue. Residues N645, N721, and N756 are each glycosylated (N-linked (GlcNAc...) asparagine).

The protein belongs to the peptidase S8 family.

The protein localises to the secreted. The protein is Subtilisin-like protease SBT3.8 of Arabidopsis thaliana (Mouse-ear cress).